Here is a 483-residue protein sequence, read N- to C-terminus: Xylulose kinase (483 aa).

77–78 (MH) lines the substrate pocket. Aspartate 233 functions as the Proton acceptor in the catalytic mechanism.

This sequence belongs to the FGGY kinase family.

The catalysed reaction is D-xylulose + ATP = D-xylulose 5-phosphate + ADP + H(+). Functionally, catalyzes the phosphorylation of D-xylulose to D-xylulose 5-phosphate. In Klebsiella pneumoniae, this protein is Xylulose kinase.